Consider the following 741-residue polypeptide: NAD(P)H-quinone oxidoreductase subunit 5, chloroplastic (741 aa).

Transmembrane regions (helical) follow at residues 9–29 (WVIP…LFFI), 39–59 (IWAF…IQLS), 89–109 (IDPL…LVLI), 125–145 (FVYI…SNLI), 147–167 (IYFF…FWFT), 185–205 (GDFG…SLEF), 219–239 (NGIN…GAVA), 258–278 (TPIS…FLLA), 280–300 (LFPL…VGTI), 327–347 (LGYM…FHLI), 354–374 (ALLF…VGYS), 396–416 (TTFL…CFWS), 425–445 (WLYS…TAFY), 542–562 (LFPL…GISF), 605–625 (AISS…LYGS), and 721–741 (ISSY…FFIS).

The protein belongs to the complex I subunit 5 family. NDH is composed of at least 16 different subunits, 5 of which are encoded in the nucleus.

It localises to the plastid. Its subcellular location is the chloroplast thylakoid membrane. The catalysed reaction is a plastoquinone + NADH + (n+1) H(+)(in) = a plastoquinol + NAD(+) + n H(+)(out). It carries out the reaction a plastoquinone + NADPH + (n+1) H(+)(in) = a plastoquinol + NADP(+) + n H(+)(out). In terms of biological role, NDH shuttles electrons from NAD(P)H:plastoquinone, via FMN and iron-sulfur (Fe-S) centers, to quinones in the photosynthetic chain and possibly in a chloroplast respiratory chain. The immediate electron acceptor for the enzyme in this species is believed to be plastoquinone. Couples the redox reaction to proton translocation, and thus conserves the redox energy in a proton gradient. The sequence is that of NAD(P)H-quinone oxidoreductase subunit 5, chloroplastic (ndhF) from Lolium perenne (Perennial ryegrass).